A 295-amino-acid polypeptide reads, in one-letter code: Ribosomal RNA small subunit methyltransferase A (295 aa).

Residues Asn-28, Leu-30, Gly-55, Glu-76, Asp-101, and Asn-131 each coordinate S-adenosyl-L-methionine.

This sequence belongs to the class I-like SAM-binding methyltransferase superfamily. rRNA adenine N(6)-methyltransferase family. RsmA subfamily.

It is found in the cytoplasm. It carries out the reaction adenosine(1518)/adenosine(1519) in 16S rRNA + 4 S-adenosyl-L-methionine = N(6)-dimethyladenosine(1518)/N(6)-dimethyladenosine(1519) in 16S rRNA + 4 S-adenosyl-L-homocysteine + 4 H(+). Its function is as follows. Specifically dimethylates two adjacent adenosines (A1518 and A1519) in the loop of a conserved hairpin near the 3'-end of 16S rRNA in the 30S particle. May play a critical role in biogenesis of 30S subunits. This chain is Ribosomal RNA small subunit methyltransferase A, found in Pelotomaculum thermopropionicum (strain DSM 13744 / JCM 10971 / SI).